Consider the following 350-residue polypeptide: (RS)-norcoclaurine 6-O-methyltransferase (350 aa).

Residue Met166 coordinates S-adenosyl-L-methionine. Asp169 is a binding site for substrate. S-adenosyl-L-methionine contacts are provided by residues Thr170, Gly195, Asp218, 238 to 239 (DM), and Lys252. Residues 253–257 (CILHD) and Asp306 each bind substrate. The active-site Proton acceptor is the His256.

It belongs to the class I-like SAM-binding methyltransferase superfamily. Cation-independent O-methyltransferase family. COMT subfamily. In terms of assembly, homodimer. As to expression, expressed in leaf primordia of rhizomes and root endodermis.

It catalyses the reaction (S)-norcoclaurine + S-adenosyl-L-methionine = (S)-coclaurine + S-adenosyl-L-homocysteine + H(+). It carries out the reaction norcoclaurine + S-adenosyl-L-methionine = coclaurine + S-adenosyl-L-homocysteine + H(+). With respect to regulation, inhibited by sanguinarine. Its function is as follows. Involved in the biosynthesis of coclaurine, a precursor of benzylisoquinoline alkaloids. Catalyzes the transfer of the S-methyl group of S-adenosyl-L-methionine (AdoMet) to the 6-hydroxyl group of norcoclaurine to form coclaurine. This chain is (RS)-norcoclaurine 6-O-methyltransferase, found in Thalictrum flavum subsp. glaucum (Yellow meadow rue).